A 164-amino-acid polypeptide reads, in one-letter code: Putative 4-hydroxy-4-methyl-2-oxoglutarate aldolase (164 aa).

Residues 79–82 and Arg101 contribute to the substrate site; that span reads GDRL. Residue Asp102 coordinates a divalent metal cation.

Belongs to the class II aldolase/RraA-like family. In terms of assembly, homotrimer. The cofactor is a divalent metal cation.

It carries out the reaction 4-hydroxy-4-methyl-2-oxoglutarate = 2 pyruvate. The enzyme catalyses oxaloacetate + H(+) = pyruvate + CO2. In terms of biological role, catalyzes the aldol cleavage of 4-hydroxy-4-methyl-2-oxoglutarate (HMG) into 2 molecules of pyruvate. Also contains a secondary oxaloacetate (OAA) decarboxylase activity due to the common pyruvate enolate transition state formed following C-C bond cleavage in the retro-aldol and decarboxylation reactions. The sequence is that of Putative 4-hydroxy-4-methyl-2-oxoglutarate aldolase from Halorhodospira halophila (strain DSM 244 / SL1) (Ectothiorhodospira halophila (strain DSM 244 / SL1)).